A 475-amino-acid polypeptide reads, in one-letter code: BTB/POZ domain-containing protein 10 (475 aa).

The tract at residues 1 to 143 is disordered; the sequence is MAGRPHPYDG…SSQSSSDGSC (143 aa). Over residues 22 to 31 the composition is skewed to basic residues; the sequence is LHSRPRKLYK. Positions 57-80 are enriched in basic and acidic residues; that stretch reads GHERSRDRRRSSDRSRDSSHERTE. Residues 81–94 show a composition bias toward polar residues; that stretch reads SQLTPCIRNVTSPT. The segment covering 97–107 has biased composition (basic and acidic residues); it reads HHVEREKDHSS. Low complexity predominate over residues 108-142; sequence SRPSSPRPQKASPNGSISSAGNSSRNSSQSSSDGS. The segment at 146–475 is interaction with AKT family members; that stretch reads AGEMVFVYEN…LDPDAQNPML (330 aa). Residues 167 to 241 form the BTB domain; that stretch reads ERVTLIVDNT…YKTGIIRCPD (75 aa). The disordered stretch occupies residues 455–475; that stretch reads LPIHPPSGNSDLDPDAQNPML.

As to quaternary structure, interacts (via C-terminal 330-amino-acid region) with AKT1; AKT2 and AKT3. Interacts with PPP2CA and PPP1CA. Ubiquitously expressed. Highly expressed in adult brain, testis, aorta and small intestine and weakly expressed in the heart, lung, liver, kidney, pancreas, spleen, thymus, prostate, ovary and colon. Down-regulated in glioma.

The protein localises to the nucleus. The protein resides in the cytoplasm. Plays a major role as an activator of AKT family members by inhibiting PPP2CA-mediated dephosphorylation, thereby keeping AKTs activated. Plays a role in preventing motor neuronal death and accelerating the growth of pancreatic beta cells. The protein is BTB/POZ domain-containing protein 10 (BTBD10) of Homo sapiens (Human).